A 116-amino-acid polypeptide reads, in one-letter code: Ribosome-binding factor A (116 aa).

Belongs to the RbfA family. Monomer. Binds 30S ribosomal subunits, but not 50S ribosomal subunits or 70S ribosomes.

It localises to the cytoplasm. Its function is as follows. One of several proteins that assist in the late maturation steps of the functional core of the 30S ribosomal subunit. Associates with free 30S ribosomal subunits (but not with 30S subunits that are part of 70S ribosomes or polysomes). Required for efficient processing of 16S rRNA. May interact with the 5'-terminal helix region of 16S rRNA. In Streptococcus pneumoniae (strain ATCC BAA-255 / R6), this protein is Ribosome-binding factor A.